The following is a 567-amino-acid chain: Proline--tRNA ligase (567 aa).

The protein belongs to the class-II aminoacyl-tRNA synthetase family. ProS type 1 subfamily. Homodimer.

It is found in the cytoplasm. The enzyme catalyses tRNA(Pro) + L-proline + ATP = L-prolyl-tRNA(Pro) + AMP + diphosphate. In terms of biological role, catalyzes the attachment of proline to tRNA(Pro) in a two-step reaction: proline is first activated by ATP to form Pro-AMP and then transferred to the acceptor end of tRNA(Pro). As ProRS can inadvertently accommodate and process non-cognate amino acids such as alanine and cysteine, to avoid such errors it has two additional distinct editing activities against alanine. One activity is designated as 'pretransfer' editing and involves the tRNA(Pro)-independent hydrolysis of activated Ala-AMP. The other activity is designated 'posttransfer' editing and involves deacylation of mischarged Ala-tRNA(Pro). The misacylated Cys-tRNA(Pro) is not edited by ProRS. The protein is Proline--tRNA ligase of Staphylococcus aureus (strain COL).